Reading from the N-terminus, the 212-residue chain is Adenylate kinase (212 aa).

10–15 (GAGKGT) provides a ligand contact to ATP. Residues 30–59 (STGDMFRAAMANQTEMGRLAKSYIDKGELV) are NMP. AMP contacts are provided by residues T31, R36, 57 to 59 (ELV), 86 to 89 (GYPR), and Q93. Residues 127-159 (GRIINRKTGETFHKVFNPPVDYKEEDYYQREDD) form an LID region. ATP contacts are provided by residues R128 and 137 to 138 (TF). AMP-binding residues include R156 and R167. Q195 serves as a coordination point for ATP.

Belongs to the adenylate kinase family. Monomer.

It is found in the cytoplasm. The enzyme catalyses AMP + ATP = 2 ADP. The protein operates within purine metabolism; AMP biosynthesis via salvage pathway; AMP from ADP: step 1/1. In terms of biological role, catalyzes the reversible transfer of the terminal phosphate group between ATP and AMP. Plays an important role in cellular energy homeostasis and in adenine nucleotide metabolism. The polypeptide is Adenylate kinase (Streptococcus agalactiae serotype III (strain NEM316)).